Consider the following 381-residue polypeptide: Succinyl-diaminopimelate desuccinylase (381 aa).

His68 provides a ligand contact to Zn(2+). Asp70 is a catalytic residue. A Zn(2+)-binding site is contributed by Asp101. The active-site Proton acceptor is the Glu135. Zn(2+) contacts are provided by Glu136, Glu164, and His350.

It belongs to the peptidase M20A family. DapE subfamily. In terms of assembly, homodimer. Requires Zn(2+) as cofactor. It depends on Co(2+) as a cofactor.

The enzyme catalyses N-succinyl-(2S,6S)-2,6-diaminopimelate + H2O = (2S,6S)-2,6-diaminopimelate + succinate. It participates in amino-acid biosynthesis; L-lysine biosynthesis via DAP pathway; LL-2,6-diaminopimelate from (S)-tetrahydrodipicolinate (succinylase route): step 3/3. In terms of biological role, catalyzes the hydrolysis of N-succinyl-L,L-diaminopimelic acid (SDAP), forming succinate and LL-2,6-diaminopimelate (DAP), an intermediate involved in the bacterial biosynthesis of lysine and meso-diaminopimelic acid, an essential component of bacterial cell walls. In Neisseria meningitidis serogroup C (strain 053442), this protein is Succinyl-diaminopimelate desuccinylase.